The chain runs to 80 residues: MAFLKKSLFLVLFLGIVSLSICEEEKRVGEEEEKQEEENEELSEEELRERRAWLDKLKSLGKVVGKVAIGVAQHYLNPQQ.

Positions 1–22 are cleaved as a signal peptide; sequence MAFLKKSLFLVLFLGIVSLSIC. Residues 23 to 49 constitute a propeptide that is removed on maturation; sequence EEEKRVGEEEEKQEEENEELSEEELRE. The segment at 27-46 is disordered; that stretch reads RVGEEEEKQEEENEELSEEE. Residues 30–44 show a composition bias toward acidic residues; it reads EEEEKQEEENEELSE.

Belongs to the frog skin active peptide (FSAP) family. Dermaseptin subfamily. In terms of tissue distribution, expressed by the skin glands.

It is found in the secreted. Its function is as follows. Has antibacterial activity. The protein is Raniseptin-2 of Boana raniceps (Chaco tree frog).